The chain runs to 352 residues: Photosystem II D2 protein (352 aa).

T2 carries the post-translational modification N-acetylthreonine. T2 is modified (phosphothreonine). The helical transmembrane segment at 40–60 (CAYFALGGWLTGTTFVTSWYT) threads the bilayer. H117 is a binding site for chlorophyll a. A helical membrane pass occupies residues 124 to 140 (GFMLRQFEIARAVKIRP). Residues Q129 and N142 each coordinate pheophytin a. A helical transmembrane segment spans residues 152-165 (VFVSVFLIYPLGQA). Residue H197 coordinates chlorophyll a. The helical transmembrane segment at 207–227 (AALLCAIHGATVENTLFEDGD) threads the bilayer. A plastoquinone-binding residues include H214 and F261. H214 serves as a coordination point for Fe cation. H268 provides a ligand contact to Fe cation. The chain crosses the membrane as a helical span at residues 278-294 (GLWMSALGVVGLALNLR).

This sequence belongs to the reaction center PufL/M/PsbA/D family. As to quaternary structure, PSII is composed of 1 copy each of membrane proteins PsbA, PsbB, PsbC, PsbD, PsbE, PsbF, PsbH, PsbI, PsbJ, PsbK, PsbL, PsbM, PsbT, PsbX, PsbY, PsbZ, Psb30/Ycf12, at least 3 peripheral proteins of the oxygen-evolving complex and a large number of cofactors. It forms dimeric complexes. The D1/D2 heterodimer binds P680, chlorophylls that are the primary electron donor of PSII, and subsequent electron acceptors. It shares a non-heme iron and each subunit binds pheophytin, quinone, additional chlorophylls, carotenoids and lipids. There is also a Cl(-1) ion associated with D1 and D2, which is required for oxygen evolution. The PSII complex binds additional chlorophylls, carotenoids and specific lipids. is required as a cofactor.

The protein localises to the plastid. It localises to the chloroplast thylakoid membrane. It catalyses the reaction 2 a plastoquinone + 4 hnu + 2 H2O = 2 a plastoquinol + O2. Photosystem II (PSII) is a light-driven water:plastoquinone oxidoreductase that uses light energy to abstract electrons from H(2)O, generating O(2) and a proton gradient subsequently used for ATP formation. It consists of a core antenna complex that captures photons, and an electron transfer chain that converts photonic excitation into a charge separation. The D1/D2 (PsbA/PsbD) reaction center heterodimer binds P680, the primary electron donor of PSII as well as several subsequent electron acceptors. D2 is needed for assembly of a stable PSII complex. The sequence is that of Photosystem II D2 protein from Tupiella akineta (Green alga).